The chain runs to 314 residues: UPF0761 membrane protein VIBHAR_00593 (314 aa).

Helical transmembrane passes span tyrosine 41–leucine 61, methionine 104–aspartate 124, phenylalanine 143–valine 163, phenylalanine 185–valine 205, isoleucine 217–isoleucine 237, and alanine 249–isoleucine 269.

This sequence belongs to the UPF0761 family.

Its subcellular location is the cell inner membrane. In Vibrio campbellii (strain ATCC BAA-1116), this protein is UPF0761 membrane protein VIBHAR_00593.